Reading from the N-terminus, the 974-residue chain is Apical junction component 1 homolog (974 aa).

3 disordered regions span residues 23–137 (PGLT…PSYP), 201–233 (ARSS…PRHV), and 306–326 (CSRP…GGSY). Ser-52 carries the post-translational modification Phosphoserine. Over residues 69–79 (EPPPPEPAPPR) the composition is skewed to pro residues. Residues 116-134 (RGREAQRAVRVEGSPRREP) show a composition bias toward basic and acidic residues. Ser-129 is subject to Phosphoserine. The span at 201 to 216 (ARSSRSCAPRETTSWA) shows a compositional bias: polar residues. Arg-322 is subject to Omega-N-methylarginine. A phosphoserine mark is found at Ser-468, Ser-509, and Ser-512. Positions 539–576 (DLRSVDRPTAKGWELPGGRPRQPVSTVPEGPASSRQRS) are disordered. Ser-593 is subject to Phosphoserine. Positions 618–661 (AGPGGATLLAPSRSPPASAGSTEEPTGSGEAADASPEPSADEDD) are disordered. Low complexity predominate over residues 623-636 (ATLLAPSRSPPASA). Arg-749 carries the asymmetric dimethylarginine; alternate modification. Residue Arg-749 is modified to Omega-N-methylarginine; alternate.

It is found in the apical cell membrane. The protein resides in the cell projection. It localises to the cilium. The protein localises to the cell junction. Its subcellular location is the adherens junction. Functionally, may be involved in the control of adherens junction integrity. In Mus musculus (Mouse), this protein is Apical junction component 1 homolog (Ajm1).